Consider the following 433-residue polypeptide: Ectonucleoside triphosphate diphosphohydrolase 5 (433 aa).

The first 24 residues, 1–24 (MATTWGAAFFMLVASCVCSTVFHR), serve as a signal peptide directing secretion. The active-site Proton acceptor is the Glu-172. A glycan (N-linked (GlcNAc...) asparagine) is linked at Asn-232. 2 disulfide bridges follow: Cys-272–Cys-308 and Cys-368–Cys-382.

Belongs to the GDA1/CD39 NTPase family. Monomer; active form. Homodimer; disulfide-linked. Homodimers are enzymatically inactive. It depends on Ca(2+) as a cofactor. The cofactor is Mg(2+). Post-translationally, N-glycosylated; high-mannose type.

It is found in the endoplasmic reticulum. It localises to the secreted. The enzyme catalyses a ribonucleoside 5'-diphosphate + H2O = a ribonucleoside 5'-phosphate + phosphate + H(+). It catalyses the reaction GDP + H2O = GMP + phosphate + H(+). It carries out the reaction UDP + H2O = UMP + phosphate + H(+). The catalysed reaction is IDP + H2O = IMP + phosphate + H(+). The enzyme catalyses CDP + H2O = CMP + phosphate + H(+). It catalyses the reaction ADP + H2O = AMP + phosphate + H(+). It functions in the pathway protein modification; protein glycosylation. Hydrolyzes nucleoside diphosphates with a preference for GDP, IDP and UDP compared to ADP and CDP. In the lumen of the endoplasmic reticulum, hydrolyzes UDP that acts as an end-product feedback inhibitor of the UDP-Glc:glycoprotein glucosyltransferases. UMP can be transported back by an UDP-sugar antiporter to the cytosol where it is consumed to regenerate UDP-glucose. Therefore, it positively regulates protein reglucosylation by clearing UDP from the ER lumen and by promoting the regeneration of UDP-glucose. Protein reglucosylation is essential to proper glycoprotein folding and quality control in the ER. The polypeptide is Ectonucleoside triphosphate diphosphohydrolase 5 (ENTPD5) (Ailuropoda melanoleuca (Giant panda)).